A 416-amino-acid polypeptide reads, in one-letter code: Lactose permease (416 aa).

The Cytoplasmic portion of the chain corresponds to 1-13 (MKLSELAPRERHN). The helical transmembrane segment at 14–34 (FIYFMLFFFFYYFIMSAYFPF) threads the bilayer. Over 35–50 (FPVWLAEVNHLTKTET) the chain is Periplasmic. Residues 51 to 71 (GIVFSCISLFAIIFQPVFGLI) form a helical membrane-spanning segment. Residues 72–80 (SDKLGLRKH) are Cytoplasmic-facing. A helical membrane pass occupies residues 81-101 (LLWTITILLILFAPFFIFVFS). Residue proline 102 is a topological domain, periplasmic. The chain crosses the membrane as a helical span at residues 103 to 123 (LLQMNIMAGALVGGVYLGIVF). Residues 124–149 (SSRSGAVEAYIERVSRANRFEYGKVR) lie on the Cytoplasmic side of the membrane. 2 helical membrane passes run 150 to 170 (VSGC…FSID) and 171 to 191 (PNIT…LLWV). Residues 192 to 223 (SKPESSNSAEVIDALGANRQAFSMRTAAELFR) lie on the Cytoplasmic side of the membrane. A helical membrane pass occupies residues 224-244 (MPRFWGFIIYVVGVASVYDVF). The Periplasmic portion of the chain corresponds to 245–267 (DQQFANFFKGFFSSPQRGTEVFG). A helical membrane pass occupies residues 268 to 288 (FVTTGGELLNALIMFCAPAII). Topologically, residues 289-295 (NRIGAKN) are cytoplasmic. The next 2 membrane-spanning stretches (helical) occupy residues 296–316 (ALLI…FATS) and 317–337 (AVEV…LLVG). Over 338 to 353 (TFKYISSAFKGKLSAT) the chain is Cytoplasmic. The chain crosses the membrane as a helical span at residues 354–374 (LFLIGFNLSKQLSSVVLSAWV). Topologically, residues 375–384 (GRMYDTVGFH) are periplasmic. The chain crosses the membrane as a helical span at residues 385-405 (QAYLILGCITLSFTVISLFTL). At 406–416 (KGSKTLLPATA) the chain is on the cytoplasmic side.

It belongs to the major facilitator superfamily. Oligosaccharide:H(+) symporter (OHS) (TC 2.A.1.5) family.

The protein localises to the cell inner membrane. The catalysed reaction is lactose(in) + H(+)(in) = lactose(out) + H(+)(out). In terms of biological role, responsible for transport of beta-galactosides into the cell, with the concomitant import of a proton (symport system). The protein is Lactose permease (lacY) of Klebsiella oxytoca.